Consider the following 171-residue polypeptide: Endoribonuclease YbeY (171 aa).

Zn(2+) is bound by residues H130, H134, and H140.

This sequence belongs to the endoribonuclease YbeY family. It depends on Zn(2+) as a cofactor.

It localises to the cytoplasm. Functionally, single strand-specific metallo-endoribonuclease involved in late-stage 70S ribosome quality control and in maturation of the 3' terminus of the 16S rRNA. This Neisseria gonorrhoeae (strain ATCC 700825 / FA 1090) protein is Endoribonuclease YbeY.